The sequence spans 511 residues: Potassium voltage-gated channel subfamily A member 10 (511 aa).

The interval 25 to 44 (EPGYATDFDPTSSKGRPGSS) is disordered. The helical transmembrane segment at 218 to 238 (VAVVSVLVVVISITIFCLETL) threads the bilayer. A helical membrane pass occupies residues 271–292 (FFMVESTCIVWFTFELVLRFVV). Residue cysteine 293 is the site of S-palmitoyl cysteine attachment. A helical transmembrane segment spans residues 303-323 (IMNIIDIISIIPYFATLITEL). Residues 339–358 (ILRIIRLVRVFRIFKLSRHS) form a helical; Voltage-sensor membrane-spanning segment. A helical membrane pass occupies residues 375–395 (LGLLIFFLFIGVILFSSAVYF). Positions 421–426 (TVGYGD) match the Selectivity filter motif. Residues 436 to 456 (IVGTLCAIAGVLTIALPVPVI) form a helical membrane-spanning segment. The interval 489–511 (SRMGSTESLNKTNGSCSAEKSRK) is disordered.

This sequence belongs to the potassium channel family. A (Shaker) (TC 1.A.1.2) subfamily. Kv1.8/KCNA10 sub-subfamily. As to quaternary structure, homotetramer. Interacts with KCN4B/POMP. Interaction with KCN4B/POMP is necessary for the modulation of channel activity by cAMP. As to expression, expressed strongly in the inner ear and weakly in skeletal muscle. Not detected in other tissues.

The protein localises to the membrane. The enzyme catalyses K(+)(in) = K(+)(out). Its activity is regulated as follows. The channel activity is up-regulated by cAMP. Functionally, voltage-gated potassium ion channel that mediates K(+) permeability of excitable membranes. When opened in response to the voltage difference across the membrane, KCNA10 channel selectively allows the flow of potassium ions across the membrane down their electrochemical gradient. The chain is Potassium voltage-gated channel subfamily A member 10 from Mus musculus (Mouse).